The sequence spans 475 residues: MSASGKEKPLKDVPGSYGVPVVGALKDRLDFYWFQGEVEFYKSRMEKNQSTVFRVNFPPGPPGFPEGHGIVLLDQVSYSVLLDNAKVDKRDTLIGSYMPDLAFTGGYRTLPYLDTAEEKHTTYKSLMFEILHESAQRFGPELSSAFDRTAQEWEAKIAKDGSVESLSTAGNMVIQFLYKTITHQDPMATMGDDPHSVYMAWTGVQFAGIAYTNLPHITEELLMHSFQLPFFPIKKKYEQIVEFFRSAGSGLLDLAVTKYGLDREEALHNLVFSFGINTRLGLLKMFPPILFFIARAGAEFQARLKQEIRGRMKKREDAASIQALGDLKLVKATVLEVFRLMPSIFVAFGRARQDLEVESHDARYKIKKGELLGTHQYFVMRDPVVFKDPHSFVPDRFMGSEGAALLPHIVWSNGRETDSPTPTNKQCPGKNQAELIAVQFIAEMFLRYDSWEVTQESSVSATKLDVHLCKLVKRS.

Cysteine 427 contacts heme.

Belongs to the cytochrome P450 family. Heme serves as cofactor.

It catalyses the reaction (13S)-hydroperoxy-(9Z,11E)-octadecadienoate = etheroleate + H2O. The enzyme catalyses (13S)-hydroperoxy-(9Z,11E,15Z)-octadecatrienoate = etherolenate + H2O. It functions in the pathway lipid metabolism; oxylipin biosynthesis. Divinyl ether synthase involved in oxylipin biosynthesis. Catalyzes the conversion of (13S)-hydroperoxy-(9Z,11E)-octadecadienoate (13-HPOD) to etheroleate and (13S)-hydroperoxy-(9Z,11E,15Z)-octadecatrienoate (13-HPOT) to etherolenate. Has no activity with the corresponding 9-hydroperoxides (9-HPOD and 9-HPOT). This is Divinyl ether synthase CYP74M1 from Selaginella moellendorffii (Spikemoss).